A 347-amino-acid polypeptide reads, in one-letter code: MDLQAQLEELKTKTLETLQSLTGNHTKELQDLRVAVLGKKGSLTELLKGLKDLSNDLRPVVGKQVNEVRDLLTKAFEEQAKIVEAAKIQAQLDAESIDVTLPGRQMTLGHRHVLTQTSEEIEDIFLGMGFQIVDGFEVEKDYYNFERMNLPKDHPARDMQDTFYITEEILLRTHTSPVQARTLDQHDFSKGPLKMVSPGRVFRRDTDDATHSHQFHQIEGLVVGKNISMRDLKGTLEMIIKKMFGEERSIRLRPSYFPFTEPSVEVDVSCFKCGGKGCNVCKKTGWIEILGAGMVHPSVLEMSGVDAKEYSGFAFGLGQERIAMLRYGINDIRGFYQGDQRFSEQFN.

Residue Glu261 participates in Mg(2+) binding.

Belongs to the class-II aminoacyl-tRNA synthetase family. Phe-tRNA synthetase alpha subunit type 1 subfamily. Tetramer of two alpha and two beta subunits. It depends on Mg(2+) as a cofactor.

The protein resides in the cytoplasm. The enzyme catalyses tRNA(Phe) + L-phenylalanine + ATP = L-phenylalanyl-tRNA(Phe) + AMP + diphosphate + H(+). The sequence is that of Phenylalanine--tRNA ligase alpha subunit from Streptococcus pyogenes serotype M18 (strain MGAS8232).